Reading from the N-terminus, the 363-residue chain is MNDIQLDQASVKKRPSGAYDATTRLAASWYVAMRSNELKDKPTELTLFGRPCVAWRGATGRAVVMDRHCSHLGANLADGRIKDGCIQCPFHHWRYDEQGQCVHIPGHNQAVRQLEPVPRGARQPTLVTAERYGYVWVWYGSPLPLHPLPEISAADVDNGDFMHLHFAFETTTAVLRIVENFYDAQHATPVHALPISAFELKLFDDWRQWPEVESLALAGAWFGAGIDFTVDRYFGPLGMLSRALGLNMSQMNLHFDGYPGGCVMTVALDGDVKYKLLQCVTPVSEGKNVMHMLISIKKVGGILRRATDFVLFGLQTRQAAGYDVKIWNGMKPDGGGAYSKYDKLVLKYRAFYRGWVDRVASER.

One can recognise a Rieske domain in the interval 29-137; it reads WYVAMRSNEL…TAERYGYVWV (109 aa). [2Fe-2S] cluster-binding residues include Cys-69, His-71, Cys-88, and His-91.

In terms of assembly, homodimer. [2Fe-2S] cluster serves as cofactor. It depends on Fe cation as a cofactor. The cofactor is FMN.

The enzyme catalyses aminopyrrolnitrin + NADPH + 2 O2 + H(+) = pyrrolnitrin + NADP(+) + 2 H2O. It functions in the pathway antibiotic biosynthesis. Functionally, involved in the biosynthesis of the antifungal antibiotic pyrrolnitrin (PRN). Catalyzes the oxidation of the amino group of aminopyrrolnitrin (APRN) to a nitro group to form PRN. It has high substrate specificity toward physiological substrate aminopyrrolnitrin, p-aminobenzylamine (pABA), p-aminobenzyl alcohol, and p-aminophenyl alanine. The polypeptide is Aminopyrrolnitrin oxygenase PrnD (prnD) (Pseudomonas fluorescens).